We begin with the raw amino-acid sequence, 469 residues long: MDESVDRVLAGKYPAKAHAKRVAARIRELGYGESGVIYLEGQKTQMIEDNDGSMPFRQRRNFFYLSGCPLPDSYLTYNIEEDHLTLFIPPIDEDSVIWSGLPLSPDEALEMYDVDAVLLTTDVNTSLAHFCSVKKGKKVFALADQVSPHITFLPFQETDFDVLKRAAEESRVVKDTYEIALLRRANEISTKAHVAVIKAARSAANERELEAIFIATCMSYGCREQSYHPIFASGTNAATLHYQNNNEDLVDKTTGEKRLNMLVDAGGEYRTYCADITRVVPLSGKFSAESRQIYDIVLDMQMTSLAMIRAGVMWEDVHSNSHRVAIRGLLKLGILRGTEEELFDKGISVAFFPHGVGHYLGMDTHDTGGNPNYEDENPKFKYLRLRGTLACGAVVTVEPGIYFCRFIIDPYLASPELGKYIDTNVLERYWNVGGVRIEDNVVVTQNGHDNLTAAPKIPEEIEKLVAATQ.

Residues D264, D275, E398, and E438 each contribute to the Mn(2+) site.

The protein belongs to the peptidase M24B family. Mn(2+) is required as a cofactor.

The enzyme catalyses Release of any N-terminal amino acid, including proline, that is linked to proline, even from a dipeptide or tripeptide.. Functionally, catalyzes the removal of a penultimate prolyl residue from the N-termini of peptides. This is Probable Xaa-Pro aminopeptidase PEPP (PEPP) from Ajellomyces capsulatus (strain H143) (Darling's disease fungus).